A 459-amino-acid polypeptide reads, in one-letter code: Mitochondrial distribution and morphology protein 34 (459 aa).

The region spanning 1-190 is the SMP-LTD domain; it reads MSFRFNEAVF…LPSLIFNTSQ (190 aa). Residues 338–347 are compositionally biased toward basic and acidic residues; the sequence is RSNSNDDNAK. Residues 338–375 are disordered; that stretch reads RSNSNDDNAKPRRRKIKCKKTRTPSNLQSQGEQAVDDS. The span at 348–359 shows a compositional bias: basic residues; it reads PRRRKIKCKKTR.

This sequence belongs to the MDM34 family. As to quaternary structure, component of the ER-mitochondria encounter structure (ERMES) or MDM complex, composed of MMM1, MDM10, MDM12 and MDM34. In terms of processing, ubiquitinated by a SCF (SKP1-CUL1-F-box protein) E3 ubiquitin-protein ligase complex containing the F-box protein MDM30. Ubiquitination is important for mitochondrial integrity.

It is found in the mitochondrion outer membrane. In terms of biological role, component of the ERMES/MDM complex, which serves as a molecular tether to connect the endoplasmic reticulum (ER) and mitochondria. Components of this complex are involved in the control of mitochondrial shape and protein biogenesis, and function in nonvesicular lipid trafficking between the ER and mitochondria. MDM34 is required for the interaction of the ER-resident membrane protein MMM1 and the outer mitochondrial membrane-resident beta-barrel protein MDM10. The protein is Mitochondrial distribution and morphology protein 34 of Saccharomyces cerevisiae (strain RM11-1a) (Baker's yeast).